We begin with the raw amino-acid sequence, 109 residues long: Glutaredoxin 4 (109 aa).

Positions 4–106 (LDKIKKQISE…TLLADVAAKY (103 aa)) constitute a Glutaredoxin domain. Lys21 provides a ligand contact to glutathione. Residue Cys29 coordinates [2Fe-2S] cluster. Residues Arg58, Phe70, and 83-84 (CD) contribute to the glutathione site.

It belongs to the glutaredoxin family. Monothiol subfamily. Homodimer.

Its subcellular location is the cytoplasm. In terms of biological role, monothiol glutaredoxin involved in the biogenesis of iron-sulfur clusters. The sequence is that of Glutaredoxin 4 (grxD) from Pasteurella multocida (strain Pm70).